We begin with the raw amino-acid sequence, 126 residues long: Probable 4-amino-4-deoxy-L-arabinose-phosphoundecaprenol flippase subunit ArnF (126 aa).

Over 1 to 4 the chain is Cytoplasmic; the sequence is MKGY. The helical transmembrane segment at 5–25 threads the bilayer; it reads IWGLISVLLVTIAQLLLKWGV. The Periplasmic segment spans residues 26 to 49; that stretch reads VNLPALNLGLHWFDIEWLWSHRHS. A helical transmembrane segment spans residues 50-70; that stretch reads LVAVMAGLAGYLLSMLCWLFT. The Cytoplasmic portion of the chain corresponds to 71 to 79; sequence LKYLPLNKA. Residues 80–100 traverse the membrane as a helical segment; it reads YPLISLSYVFVYLMVALLPWF. Over 101-102 the chain is Periplasmic; it reads NE. The helical transmembrane segment at 103–123 threads the bilayer; the sequence is TITLLKTAGVIFILYGVWLIS. The Cytoplasmic portion of the chain corresponds to 124 to 126; that stretch reads RPE.

Belongs to the ArnF family. As to quaternary structure, heterodimer of ArnE and ArnF.

It is found in the cell inner membrane. Its pathway is bacterial outer membrane biogenesis; lipopolysaccharide biosynthesis. Its function is as follows. Translocates 4-amino-4-deoxy-L-arabinose-phosphoundecaprenol (alpha-L-Ara4N-phosphoundecaprenol) from the cytoplasmic to the periplasmic side of the inner membrane. The polypeptide is Probable 4-amino-4-deoxy-L-arabinose-phosphoundecaprenol flippase subunit ArnF (Photorhabdus laumondii subsp. laumondii (strain DSM 15139 / CIP 105565 / TT01) (Photorhabdus luminescens subsp. laumondii)).